Consider the following 452-residue polypeptide: Xaa-Pro dipeptidase 1 (452 aa).

Residues D247, D258, H338, E383, and E422 each coordinate Mn(2+).

Belongs to the peptidase M24B family. Bacterial-type prolidase subfamily. It depends on Mn(2+) as a cofactor.

It carries out the reaction Xaa-L-Pro dipeptide + H2O = an L-alpha-amino acid + L-proline. Functionally, splits dipeptides with a prolyl residue in the C-terminal position. The polypeptide is Xaa-Pro dipeptidase 1 (Idiomarina loihiensis (strain ATCC BAA-735 / DSM 15497 / L2-TR)).